The following is a 72-amino-acid chain: Protein SlyX (72 aa).

It belongs to the SlyX family.

This is Protein SlyX from Cronobacter sakazakii (strain ATCC BAA-894) (Enterobacter sakazakii).